We begin with the raw amino-acid sequence, 130 residues long: Small ribosomal subunit protein uS8 (130 aa).

The protein belongs to the universal ribosomal protein uS8 family. Part of the 30S ribosomal subunit.

In terms of biological role, one of the primary rRNA binding proteins, it binds directly to 16S rRNA central domain where it helps coordinate assembly of the platform of the 30S subunit. This chain is Small ribosomal subunit protein uS8, found in Pyrobaculum neutrophilum (strain DSM 2338 / JCM 9278 / NBRC 100436 / V24Sta) (Thermoproteus neutrophilus).